Reading from the N-terminus, the 81-residue chain is Sec-independent protein translocase protein TatA (81 aa).

The chain crosses the membrane as a helical span at residues 1–21 (MGGISIWQLLIVALIVILLFG). A disordered region spans residues 34-81 (GAVKGFKNAMTPEDENKSLDDKEKDQTAATSQQAAEKQPETESKDKQA). 2 stretches are compositionally biased toward basic and acidic residues: residues 47–59 (DENKSLDDKEKDQ) and 70–81 (KQPETESKDKQA).

The protein belongs to the TatA/E family. The Tat system comprises two distinct complexes: a TatABC complex, containing multiple copies of TatA, TatB and TatC subunits, and a separate TatA complex, containing only TatA subunits. Substrates initially bind to the TatABC complex, which probably triggers association of the separate TatA complex to form the active translocon.

Its subcellular location is the cell inner membrane. Part of the twin-arginine translocation (Tat) system that transports large folded proteins containing a characteristic twin-arginine motif in their signal peptide across membranes. TatA could form the protein-conducting channel of the Tat system. This chain is Sec-independent protein translocase protein TatA, found in Shewanella frigidimarina (strain NCIMB 400).